The chain runs to 856 residues: DNA mismatch repair protein MutS (856 aa).

Gly-605–Ser-612 serves as a coordination point for ATP.

This sequence belongs to the DNA mismatch repair MutS family.

Functionally, this protein is involved in the repair of mismatches in DNA. It is possible that it carries out the mismatch recognition step. This protein has a weak ATPase activity. The polypeptide is DNA mismatch repair protein MutS (Lysinibacillus sphaericus (strain C3-41)).